The sequence spans 472 residues: Methanethiol oxidase (472 aa).

An N-acetylalanine modification is found at alanine 2. Serine 111 and serine 467 each carry phosphoserine.

It belongs to the selenium-binding protein family. Interacts with USP33. The N-terminus is blocked. As to expression, present in liver and colon (at protein level).

It is found in the nucleus. The protein resides in the cytoplasm. Its subcellular location is the cytosol. It localises to the membrane. The enzyme catalyses methanethiol + O2 + H2O = hydrogen sulfide + formaldehyde + H2O2 + H(+). It functions in the pathway organosulfur degradation. Its function is as follows. Catalyzes the oxidation of methanethiol, an organosulfur compound known to be produced in substantial amounts by gut bacteria. Selenium-binding protein which may be involved in the sensing of reactive xenobiotics in the cytoplasm. May be involved in intra-Golgi protein transport. This is Methanethiol oxidase (Selenbp1) from Rattus norvegicus (Rat).